The chain runs to 283 residues: Bifunctional protein FolD (283 aa).

Residues 166-168 (GRS), Ser191, and Ile232 each bind NADP(+).

This sequence belongs to the tetrahydrofolate dehydrogenase/cyclohydrolase family. As to quaternary structure, homodimer.

The catalysed reaction is (6R)-5,10-methylene-5,6,7,8-tetrahydrofolate + NADP(+) = (6R)-5,10-methenyltetrahydrofolate + NADPH. The enzyme catalyses (6R)-5,10-methenyltetrahydrofolate + H2O = (6R)-10-formyltetrahydrofolate + H(+). It participates in one-carbon metabolism; tetrahydrofolate interconversion. Functionally, catalyzes the oxidation of 5,10-methylenetetrahydrofolate to 5,10-methenyltetrahydrofolate and then the hydrolysis of 5,10-methenyltetrahydrofolate to 10-formyltetrahydrofolate. In Rickettsia bellii (strain RML369-C), this protein is Bifunctional protein FolD.